We begin with the raw amino-acid sequence, 382 residues long: Galactokinase (382 aa).

E34–D37 is a substrate binding site. Residue G124–S130 participates in ATP binding. 2 residues coordinate Mg(2+): S130 and E162. Residue D174 is the Proton acceptor of the active site. Y223 serves as a coordination point for substrate.

The protein belongs to the GHMP kinase family. GalK subfamily.

Its subcellular location is the cytoplasm. It carries out the reaction alpha-D-galactose + ATP = alpha-D-galactose 1-phosphate + ADP + H(+). The protein operates within carbohydrate metabolism; galactose metabolism. Functionally, catalyzes the transfer of the gamma-phosphate of ATP to D-galactose to form alpha-D-galactose-1-phosphate (Gal-1-P). The chain is Galactokinase from Shigella flexneri serotype 5b (strain 8401).